Consider the following 352-residue polypeptide: Endophilin-A1 (352 aa).

Residues 1 to 21 (MSVAGLKKQFHKATQKVSEKV) form a membrane-binding amphipathic helix region. Residues 1–27 (MSVAGLKKQFHKATQKVSEKVGGAEGT) are disordered. Positions 1–125 (MSVAGLKKQF…EVGEAMRELS (125 aa)) are binds and tubulates liposomes. Residues 18–249 (SEKVGGAEGT…LEERIRQASS (232 aa)) enclose the BAR domain. The segment at 60-87 (PNPASRAKLSMINTMSKIRGQEKGPGYP) is required for dimerization upon membrane association. The stretch at 181–248 (EELRQALEKF…RLEERIRQAS (68 aa)) forms a coiled coil. Serine 262 carries the post-translational modification Phosphoserine. A disordered region spans residues 264 to 289 (EFATGDSTQPNGGLSHTGTPKPPGVQ). Polar residues predominate over residues 268 to 281 (GDSTQPNGGLSHTG). The SH3 domain maps to 290 to 349 (MDQPCCRALYDFEPENEGELGFKEGDIITLTNQIDENWYEGMLHGQSGFFPINYVEILVA). Residue tyrosine 299 is modified to Phosphotyrosine.

It belongs to the endophilin family. Monomer; in cytoplasm. Homodimer; when associated with membranes. Interacts with SYNJ1. Interacts with DNM1. Interacts with MAP4K3; the interaction appears to regulate MAP4K3-mediated JNK activation. Interacts with OPHN1. Interacts with PDCD6IP. Interacts with BIN2. Interacts with ATXN2. Interacts with ADAM9 and ADAM15 cytoplasmic tails. Interacts with TMEM108. Interacts with ADGRB2.

It localises to the cytoplasm. Its subcellular location is the membrane. The protein resides in the early endosome. It is found in the presynapse. Functionally, implicated in synaptic vesicle endocytosis. May recruit other proteins to membranes with high curvature. Required for BDNF-dependent dendrite outgrowth. Cooperates with SH3GL2 to mediate BDNF-NTRK2 early endocytic trafficking and signaling from early endosomes. The polypeptide is Endophilin-A1 (Sh3gl2) (Mus musculus (Mouse)).